The sequence spans 130 residues: MAKKIRKIGIRKGKRKIPKGVVHVQATFNNTIVTITDIKGEVISWSSAGSCGFKGTKKGTPFAAQTAAENAVRQAIEQGMKEAEITVSGPGSGRETAIRAIRTAGLGITVLKDVTPIPHNGCRPPKKRRV.

It belongs to the universal ribosomal protein uS11 family. Part of the 30S ribosomal subunit.

Its subcellular location is the plastid. It is found in the chloroplast. The polypeptide is Small ribosomal subunit protein uS11c (Chlorokybus atmophyticus (Soil alga)).